Here is a 347-residue protein sequence, read N- to C-terminus: Beta carbonic anhydrase 1, chloroplastic (347 aa).

A chloroplast-targeting transit peptide spans 1–113 (MSTAPLSGFF…AAAKVEQITA (113 aa)). N-acetylalanine is present on Ala114. Ser175 carries the phosphoserine modification. Tyr203 carries the phosphotyrosine modification. Position 266 is a phosphoserine (Ser266). The residue at position 280 (Cys280) is an S-nitrosocysteine.

This sequence belongs to the beta-class carbonic anhydrase family. In terms of assembly, homohexamer. S-nitrosylation at Cys-280 is up-regulated during nitrosative burst and suppresses both binding of salicylic acid and carbonic anhydrase activity. S-nitrosylated in response to an avirulent but not to a virulent bacterial strain. Strongly expressed in aerial tissues including leaves, stems, flowers and siliques. Accumulates in both guard cells and mesophyll cells.

Its subcellular location is the plastid. It is found in the chloroplast stroma. It localises to the cell membrane. It catalyses the reaction hydrogencarbonate + H(+) = CO2 + H2O. Reversible hydration of carbon dioxide. Required for photosynthesis in cotyledons. Binds salicylic acid. Together with BCA4, involved in the CO(2) signaling pathway which controls gas-exchange between plants and the atmosphere by modulating stomatal development and movements. Promotes water use efficiency. The polypeptide is Beta carbonic anhydrase 1, chloroplastic (Arabidopsis thaliana (Mouse-ear cress)).